A 387-amino-acid chain; its full sequence is S-adenosylmethionine synthase (387 aa).

His-16 provides a ligand contact to ATP. Residue Asp-18 participates in Mg(2+) binding. A K(+)-binding site is contributed by Glu-44. Residues Glu-57 and Gln-100 each coordinate L-methionine. The tract at residues 100 to 110 is flexible loop; the sequence is QSPDIAQGVDE. Residues 167–169, 232–233, Asp-241, 247–248, Ala-264, and Lys-268 each bind ATP; these read DAK, RF, and RK. Position 241 (Asp-241) interacts with L-methionine. Residue Lys-272 coordinates L-methionine.

The protein belongs to the AdoMet synthase family. Homotetramer; dimer of dimers. The cofactor is Mg(2+). It depends on K(+) as a cofactor.

The protein resides in the cytoplasm. It catalyses the reaction L-methionine + ATP + H2O = S-adenosyl-L-methionine + phosphate + diphosphate. The protein operates within amino-acid biosynthesis; S-adenosyl-L-methionine biosynthesis; S-adenosyl-L-methionine from L-methionine: step 1/1. In terms of biological role, catalyzes the formation of S-adenosylmethionine (AdoMet) from methionine and ATP. The overall synthetic reaction is composed of two sequential steps, AdoMet formation and the subsequent tripolyphosphate hydrolysis which occurs prior to release of AdoMet from the enzyme. The protein is S-adenosylmethionine synthase of Janthinobacterium sp. (strain Marseille) (Minibacterium massiliensis).